The chain runs to 312 residues: Ribosomal RNA small subunit methyltransferase H (312 aa).

S-adenosyl-L-methionine contacts are provided by residues 30 to 32 (GGH), Asp50, Phe80, Asp98, and Gln105.

Belongs to the methyltransferase superfamily. RsmH family.

Its subcellular location is the cytoplasm. The enzyme catalyses cytidine(1402) in 16S rRNA + S-adenosyl-L-methionine = N(4)-methylcytidine(1402) in 16S rRNA + S-adenosyl-L-homocysteine + H(+). Specifically methylates the N4 position of cytidine in position 1402 (C1402) of 16S rRNA. The chain is Ribosomal RNA small subunit methyltransferase H from Lawsonia intracellularis (strain PHE/MN1-00).